The primary structure comprises 76 residues: Conotoxin ArMKLT2-032 (76 aa).

An N-terminal signal peptide occupies residues 1–22; the sequence is MKLTCVLIIAVLFLTACQLTTG. Positions 23 to 46 are excised as a propeptide; that stretch reads ETYSRGEQKDHALRSTDKNSKLTR. Pyrrolidone carboxylic acid is present on Q47. Cystine bridges form between C48–C62, C55–C66, and C61–C73.

The protein belongs to the conotoxin O1 superfamily. In terms of tissue distribution, expressed by the venom duct.

It localises to the secreted. This Conus arenatus (Sand-dusted cone) protein is Conotoxin ArMKLT2-032.